The sequence spans 165 residues: 3-hydroxyacyl-[acyl-carrier-protein] dehydratase FabZ (165 aa).

His64 is a catalytic residue.

Belongs to the thioester dehydratase family. FabZ subfamily.

Its subcellular location is the cytoplasm. The enzyme catalyses a (3R)-hydroxyacyl-[ACP] = a (2E)-enoyl-[ACP] + H2O. In terms of biological role, involved in unsaturated fatty acids biosynthesis. Catalyzes the dehydration of short chain beta-hydroxyacyl-ACPs and long chain saturated and unsaturated beta-hydroxyacyl-ACPs. The sequence is that of 3-hydroxyacyl-[acyl-carrier-protein] dehydratase FabZ from Acidiphilium cryptum (strain JF-5).